The primary structure comprises 240 residues: Large ribosomal subunit protein uL2 (240 aa).

A compositionally biased stretch (polar residues) spans 1–11 (MGKRLISQNRG). Disordered regions lie at residues 1 to 31 (MGKRLISQNRGRGTPKYRSPSHKRKGAVKYR) and 206 to 240 (GGGRHQHLGKPSSVSRHTSPGRKVGHIASRRTGRK). Basic residues-rich tracts occupy residues 13 to 28 (GTPKYRSPSHKRKGAV) and 224 to 240 (SPGRKVGHIASRRTGRK).

This sequence belongs to the universal ribosomal protein uL2 family. Part of the 50S ribosomal subunit. Forms a bridge to the 30S subunit in the 70S ribosome.

Functionally, one of the primary rRNA binding proteins. Required for association of the 30S and 50S subunits to form the 70S ribosome, for tRNA binding and peptide bond formation. It has been suggested to have peptidyltransferase activity; this is somewhat controversial. Makes several contacts with the 16S rRNA in the 70S ribosome. This Methanococcus maripaludis (strain C6 / ATCC BAA-1332) protein is Large ribosomal subunit protein uL2.